We begin with the raw amino-acid sequence, 74 residues long: Anionic peptide clone 10 (74 aa).

The signal sequence occupies residues 1–24 (MVSKSLIVLLLVSVLVSTFFTTEA).

The protein belongs to the non-disulfide-bridged peptide (NDBP) superfamily. Long chain multifunctional peptide (group 2) family. Expressed by the venom gland.

The protein resides in the secreted. Its function is as follows. May be an antimicrobial peptide. The chain is Anionic peptide clone 10 from Tityus costatus (Brazilian scorpion).